Here is a 435-residue protein sequence, read N- to C-terminus: 3-phosphoshikimate 1-carboxyvinyltransferase (435 aa).

3-phosphoshikimate is bound by residues K21, S22, and R26. K21 is a binding site for phosphoenolpyruvate. Residues G99 and R127 each coordinate phosphoenolpyruvate. The 3-phosphoshikimate site is built by S173, Q175, D323, and K350. Q175 serves as a coordination point for phosphoenolpyruvate. D323 serves as the catalytic Proton acceptor. Phosphoenolpyruvate is bound by residues R354 and R396.

It belongs to the EPSP synthase family. Monomer.

The protein localises to the cytoplasm. It catalyses the reaction 3-phosphoshikimate + phosphoenolpyruvate = 5-O-(1-carboxyvinyl)-3-phosphoshikimate + phosphate. It functions in the pathway metabolic intermediate biosynthesis; chorismate biosynthesis; chorismate from D-erythrose 4-phosphate and phosphoenolpyruvate: step 6/7. Catalyzes the transfer of the enolpyruvyl moiety of phosphoenolpyruvate (PEP) to the 5-hydroxyl of shikimate-3-phosphate (S3P) to produce enolpyruvyl shikimate-3-phosphate and inorganic phosphate. The sequence is that of 3-phosphoshikimate 1-carboxyvinyltransferase from Akkermansia muciniphila (strain ATCC BAA-835 / DSM 22959 / JCM 33894 / BCRC 81048 / CCUG 64013 / CIP 107961 / Muc).